The chain runs to 96 residues: Large ribosomal subunit protein bL21 (96 aa).

This sequence belongs to the bacterial ribosomal protein bL21 family. Part of the 50S ribosomal subunit. Contacts protein L20.

In terms of biological role, this protein binds to 23S rRNA in the presence of protein L20. The polypeptide is Large ribosomal subunit protein bL21 (Chlorobium phaeobacteroides (strain BS1)).